The following is a 381-amino-acid chain: L-lactate dehydrogenase (381 aa).

The region spanning methionine 1–glycine 380 is the FMN hydroxy acid dehydrogenase domain. Position 24 (tyrosine 24) interacts with substrate. FMN contacts are provided by serine 106 and glutamine 127. Tyrosine 129 is a substrate binding site. Threonine 155 serves as a coordination point for FMN. Arginine 164 provides a ligand contact to substrate. Lysine 251 provides a ligand contact to FMN. Histidine 275 acts as the Proton acceptor in catalysis. Arginine 278 contacts substrate. An FMN-binding site is contributed by aspartate 306 to arginine 330.

Belongs to the FMN-dependent alpha-hydroxy acid dehydrogenase family. In terms of assembly, homotetramer. Requires FMN as cofactor.

The protein localises to the cell inner membrane. The enzyme catalyses (S)-lactate + A = pyruvate + AH2. Catalyzes the conversion of L-lactate to pyruvate. Is coupled to the respiratory chain. This is L-lactate dehydrogenase from Pseudomonas entomophila (strain L48).